A 105-amino-acid polypeptide reads, in one-letter code: MSKLRKGDTVIVIAGKDKGKQGTVQAVKNDRIKVEGINIVTKHQKPNQATGVEGGILKQEAFLHISNVAILNAQTQKADRITYQFGEDGKKQRVYRSNGEVVATA.

It belongs to the universal ribosomal protein uL24 family. As to quaternary structure, part of the 50S ribosomal subunit.

Its function is as follows. One of two assembly initiator proteins, it binds directly to the 5'-end of the 23S rRNA, where it nucleates assembly of the 50S subunit. One of the proteins that surrounds the polypeptide exit tunnel on the outside of the subunit. This is Large ribosomal subunit protein uL24 from Psychrobacter arcticus (strain DSM 17307 / VKM B-2377 / 273-4).